The primary structure comprises 108 residues: Small cysteine and glycine repeat-containing protein 8 (108 aa).

The interval 4 to 84 (CGCGGCGGGC…RRTCSSCGCG (81 aa)) is 12 X 2 AA repeats of CG.

The protein belongs to the KRTAP type 28 family.

Its function is as follows. In the hair cortex, hair keratin intermediate filaments are embedded in an interfilamentous matrix, consisting of hair keratin-associated proteins (KRTAP), which are essential for the formation of a rigid and resistant hair shaft through their extensive disulfide bond cross-linking with abundant cysteine residues of hair keratins. The matrix proteins include the high-sulfur and high-glycine-tyrosine keratins. This chain is Small cysteine and glycine repeat-containing protein 8, found in Homo sapiens (Human).